The following is a 182-amino-acid chain: ATP synthase subunit delta (182 aa).

This sequence belongs to the ATPase delta chain family. As to quaternary structure, F-type ATPases have 2 components, F(1) - the catalytic core - and F(0) - the membrane proton channel. F(1) has five subunits: alpha(3), beta(3), gamma(1), delta(1), epsilon(1). CF(0) has four main subunits: a(1), b(1), b'(1) and c(10-14). The alpha and beta chains form an alternating ring which encloses part of the gamma chain. F(1) is attached to F(0) by a central stalk formed by the gamma and epsilon chains, while a peripheral stalk is formed by the delta, b and b' chains.

The protein localises to the cellular thylakoid membrane. F(1)F(0) ATP synthase produces ATP from ADP in the presence of a proton or sodium gradient. F-type ATPases consist of two structural domains, F(1) containing the extramembraneous catalytic core and F(0) containing the membrane proton channel, linked together by a central stalk and a peripheral stalk. During catalysis, ATP synthesis in the catalytic domain of F(1) is coupled via a rotary mechanism of the central stalk subunits to proton translocation. Its function is as follows. This protein is part of the stalk that links CF(0) to CF(1). It either transmits conformational changes from CF(0) to CF(1) or is implicated in proton conduction. The sequence is that of ATP synthase subunit delta from Synechococcus sp. (strain CC9902).